The sequence spans 167 residues: MAKLEAQQKDDLQEKLIAVNRVSKVVKGGRIFSFTALTVVGDGNGKIGYGYGKAREVPAAIQKAMEKARRNMVTVELNAGTLHHPVKGRHTGSKVYMQPASQGTGIIAGGAMRAVLEVAGVHNVLSKAYGSTNPINIVRATVDALVHMKSPAQIAAKRGLNVDEIRG.

Residues 12–75 (LQEKLIAVNR…EKARRNMVTV (64 aa)) enclose the S5 DRBM domain.

It belongs to the universal ribosomal protein uS5 family. In terms of assembly, part of the 30S ribosomal subunit. Contacts proteins S4 and S8.

Functionally, with S4 and S12 plays an important role in translational accuracy. Its function is as follows. Located at the back of the 30S subunit body where it stabilizes the conformation of the head with respect to the body. This Shewanella denitrificans (strain OS217 / ATCC BAA-1090 / DSM 15013) protein is Small ribosomal subunit protein uS5.